A 287-amino-acid chain; its full sequence is Pyridoxal kinase PdxY (287 aa).

Residues Ser9 and 44–45 contribute to the substrate site; that span reads MQ. ATP is bound by residues Asp111, Ala142, Glu147, and Lys180. Position 221 (Asp221) interacts with substrate.

The protein belongs to the pyridoxine kinase family. PdxY subfamily. As to quaternary structure, homodimer. Mg(2+) is required as a cofactor.

It carries out the reaction pyridoxal + ATP = pyridoxal 5'-phosphate + ADP + H(+). It functions in the pathway cofactor metabolism; pyridoxal 5'-phosphate salvage; pyridoxal 5'-phosphate from pyridoxal: step 1/1. Its function is as follows. Pyridoxal kinase involved in the salvage pathway of pyridoxal 5'-phosphate (PLP). Catalyzes the phosphorylation of pyridoxal to PLP. The sequence is that of Pyridoxal kinase PdxY from Burkholderia mallei (strain ATCC 23344).